Reading from the N-terminus, the 72-residue chain is Heat shock factor-binding protein 1-like protein 1 (72 aa).

Residues D12 to G62 adopt a coiled-coil conformation.

This sequence belongs to the HSBP1 family.

This chain is Heat shock factor-binding protein 1-like protein 1 (Hsbp1l1), found in Mus musculus (Mouse).